The sequence spans 919 residues: MDYKDTINLPKTSFKMKANLKEKEPQILQKWEDINIAYYLRNIRIGGTKFVLHDGPPYANGDIHMGTALNKVLKDIVLKYKTLRGYDAPYVPGWDTHGLPIEHNVTTKLGEKANALSKLEIRKLCEDYAMKYVDIQRESFKRLGVIGFWDKPYLTLKPEYEAKVLEILRSIVESGNIYRGTKPIYWCTECQTALAEAEVEYHDHTSDSIYVKFPLVGENNTYVIIWTTTPWTLPANVAIAVHPNFDYAKVEIGNEYWIMAKELVDKTLKEAGIDDYKIIDTFKGLTLEGEKARHPFVDRESLLVLADYVTLDEGTGCVHTAPGHGMEDYITGTKYNLQVISPVDSQGYFTDEAGKYKGMKIWEANKEIIKDLKENGFLVQSGKITHSYPHCWRCKNPVIFRATPQWFIDLEKNNYREKVLEEIKKVNWIPKWGENRISSMVRERPDWVISRQRAWGIPIPAIKCENCGETILDTKIIDHVIEIIEKEGSNAWFEKEAKELLPNDYRCPKCGGSEFKKEEDILDVWIDSGSSFEAVANSREELKKFPVDLYLEGSDQHRGWFQSSIFLSVAKHGIAPYESVLTHGFIKDEEGKKMSKSLGNVVNPKDIINKYGADILRLWVASADYRMDIKISYNILEQQVETYRKLRNTIRFLLGNINDFDPDEDSVAYEEMLEIDQWALMKLHNLIKNVTKAYDNYEFYKVHYLINNFCTIDMSSTYLDIIKDRIYVEGKKSKLRRSAQTVLYETAIALNKMISPILPFTAEEVYEHLNYSNKYETIFAELWPEYKENYLSEELEEKWNKIFALREDVLKALEEKRKEKFLGNSLDAKIILNLKDDTLKQILSQYDNNWIADLFIVSQFEFGNVDEGFEGRYATIKVTKAEGEKCERCWKVDPNTDNDPDFPGVCPRCARVLKEEINA.

Positions 57–67 (PYANGDIHMGT) match the 'HIGH' region motif. Glu-552 provides a ligand contact to L-isoleucyl-5'-AMP. Positions 593 to 597 (KMSKS) match the 'KMSKS' region motif. Lys-596 is a binding site for ATP. Residues Cys-886, Cys-889, Cys-906, and Cys-909 each coordinate Zn(2+).

This sequence belongs to the class-I aminoacyl-tRNA synthetase family. IleS type 1 subfamily. Monomer. The cofactor is Zn(2+).

Its subcellular location is the cytoplasm. The catalysed reaction is tRNA(Ile) + L-isoleucine + ATP = L-isoleucyl-tRNA(Ile) + AMP + diphosphate. Its function is as follows. Catalyzes the attachment of isoleucine to tRNA(Ile). As IleRS can inadvertently accommodate and process structurally similar amino acids such as valine, to avoid such errors it has two additional distinct tRNA(Ile)-dependent editing activities. One activity is designated as 'pretransfer' editing and involves the hydrolysis of activated Val-AMP. The other activity is designated 'posttransfer' editing and involves deacylation of mischarged Val-tRNA(Ile). This chain is Isoleucine--tRNA ligase, found in Petrotoga mobilis (strain DSM 10674 / SJ95).